We begin with the raw amino-acid sequence, 135 residues long: Small ribosomal subunit protein uS9 (135 aa).

It belongs to the universal ribosomal protein uS9 family.

This Petrotoga mobilis (strain DSM 10674 / SJ95) protein is Small ribosomal subunit protein uS9.